Reading from the N-terminus, the 890-residue chain is Protein translocase subunit SecA (890 aa).

Residues Q86, G104–T108, and D493 contribute to the ATP site. The segment covering E851–R872 has biased composition (basic and acidic residues). Residues E851–N873 form a disordered region. 4 residues coordinate Zn(2+): C876, C878, C887, and C888.

It belongs to the SecA family. As to quaternary structure, monomer and homodimer. Part of the essential Sec protein translocation apparatus which comprises SecA, SecYEG and auxiliary proteins SecDF. Other proteins may also be involved. The cofactor is Zn(2+).

The protein resides in the cell membrane. It localises to the cytoplasm. It carries out the reaction ATP + H2O + cellular proteinSide 1 = ADP + phosphate + cellular proteinSide 2.. Part of the Sec protein translocase complex. Interacts with the SecYEG preprotein conducting channel. Has a central role in coupling the hydrolysis of ATP to the transfer of proteins into and across the cell membrane, serving as an ATP-driven molecular motor driving the stepwise translocation of polypeptide chains across the membrane. This chain is Protein translocase subunit SecA, found in Alkaliphilus oremlandii (strain OhILAs) (Clostridium oremlandii (strain OhILAs)).